Consider the following 390-residue polypeptide: Putative transposase YncI (390 aa).

It belongs to the transposase 11 family.

The polypeptide is Putative transposase YncI (yncI) (Escherichia coli O157:H7).